The following is a 110-amino-acid chain: Phosphoribosyl-ATP pyrophosphatase (110 aa).

It belongs to the PRA-PH family.

The protein resides in the cytoplasm. It catalyses the reaction 1-(5-phospho-beta-D-ribosyl)-ATP + H2O = 1-(5-phospho-beta-D-ribosyl)-5'-AMP + diphosphate + H(+). Its pathway is amino-acid biosynthesis; L-histidine biosynthesis; L-histidine from 5-phospho-alpha-D-ribose 1-diphosphate: step 2/9. This Pseudomonas syringae pv. tomato (strain ATCC BAA-871 / DC3000) protein is Phosphoribosyl-ATP pyrophosphatase.